The sequence spans 338 residues: Phosphatidate cytidylyltransferase, mitochondrial (338 aa).

It belongs to the TAM41 family. Requires Mg(2+) as cofactor.

It localises to the mitochondrion inner membrane. The catalysed reaction is a 1,2-diacyl-sn-glycero-3-phosphate + CTP + H(+) = a CDP-1,2-diacyl-sn-glycerol + diphosphate. It participates in phospholipid metabolism; CDP-diacylglycerol biosynthesis; CDP-diacylglycerol from sn-glycerol 3-phosphate: step 3/3. Catalyzes the conversion of phosphatidic acid (PA) to CDP-diacylglycerol (CDP-DAG), an essential intermediate in the synthesis of phosphatidylglycerol, cardiolipin and phosphatidylinositol. This Xenopus laevis (African clawed frog) protein is Phosphatidate cytidylyltransferase, mitochondrial (tamm41).